A 373-amino-acid polypeptide reads, in one-letter code: uncharacterized protein (373 aa).

Residues 15–101 (DFTYLGCYSS…SDSYSVYVDE (87 aa)) form the WSC domain. Disordered regions lie at residues 101–171 (ESEE…SSLS), 183–210 (FSFS…ITTS), and 291–316 (NLSE…RGAA). Low complexity-rich tracts occupy residues 110-171 (SSAQ…SSLS) and 183-204 (FSFS…SSES).

This is an uncharacterized protein from Pichia angusta (Yeast).